Consider the following 570-residue polypeptide: Acetolactate synthase (570 aa).

Residue E60 participates in thiamine diphosphate binding. FAD contacts are provided by residues Q162, 266–287, and 308–327; these read FRNQ…IGYD and DEII…LIGD. A thiamine pyrophosphate binding region spans residues 399-479; it reads SHAIWMSRYF…IVHIVWNDST (81 aa). Residue D450 participates in Mg(2+) binding.

The protein belongs to the TPP enzyme family. It depends on Mg(2+) as a cofactor. The cofactor is thiamine diphosphate.

The enzyme catalyses 2 pyruvate + H(+) = (2S)-2-acetolactate + CO2. Its pathway is polyol metabolism; (R,R)-butane-2,3-diol biosynthesis; (R,R)-butane-2,3-diol from pyruvate: step 1/3. This Bacillus subtilis (strain 168) protein is Acetolactate synthase (alsS).